The primary structure comprises 281 residues: Oxidase pynE (281 aa).

Belongs to the avfA family.

Its pathway is secondary metabolite biosynthesis. In terms of biological role, oxidase; part of the gene cluster that mediates the biosynthesis of pyranonigrins, a family of antioxidative compounds. The first step of pyranonigrins biosynthesis is performed by the hybrid PKS-NRPS synthetase that condenses 6 malonyl-CoA units to an acetyl starter unit, to form a 1,3,5-trioxotetradecane-6,8-dienyl-ACP. The enoyl reductase (ER) domain of pynA is likely to be functional during the first two rounds of polyketide chain extension, to generate the saturated C-C bonds of the alkyl side chain. PynA subsequently forms the amide bond between the acyl chain and L-serine. Although pynA has a terminal reductase domain, it appears to require the thioesterase pynI for the release of the straight-chain intermediate from pynA via the formation of a tetramic acid pyranonigrin J. The methyltransferase pynC then coverts pyranonigrin J to pyranonigrin I via N-methylation. The FAD-dependent monooxygenase pynG catalyzes an epoxidation-mediated cyclization to form the dihydro-gamma-pyrone moiety, followed by pynD-catalyzed oxidation of the alcohol to the ketone and enolization to yield the characteristic tetramic acid-fused gamma-pyrone core of pyranonigrin H. Pyranonigrin H is substrate of pynH for dehydration-mediated exo-methylene formation from the serine side chain to produce pyranonigrin E, before the oxidase pynE reduces the exo-methylene of pyranonigrin E into a pendant methyl to form pyranonigrin G. The FAD-linked oxidoreductase pynB performs the reverse reaction and converts pyranonigrin G back to pyranonigrin E. The chain is Oxidase pynE from Aspergillus niger (strain ATCC MYA-4892 / CBS 513.88 / FGSC A1513).